The following is a 118-amino-acid chain: Holin-like protein CidA 2 (118 aa).

A run of 4 helical transmembrane segments spans residues 4-26, 33-52, 62-84, and 91-113; these read VTLLLQVGVLYVFSLVGTWIQGV, GSLIGMLILFLLLSTRVLPL, LIVFLPLFLIPSTTGLMEYGSFL, and IFLLVVASTVVTLIVSGYISQLL.

It belongs to the CidA/LrgA family. CidA subfamily.

It localises to the cell membrane. Functionally, increases the activity of extracellular murein hydrolases possibly by mediating their export via hole formation. Inhibited by the antiholin-like proteins LrgAB. In an unstressed cell, the LrgAB products probably inhibit the function of the CidA protein. When a cell is stressed by the addition of antibiotics or by other factors in the environment, CidA possibly oligomerizes within the bacterial cell membrane, creating lesions that disrupt the proton motive force, which in turn results in loss of cell viability. These lesions are also hypothesized to regulate the subsequent cell lysis by either allowing the murein hydrolases access to the cell wall substrate and/or regulating their activity by a possible change in the cell wall pH that results from loss of membrane potential. This Bacillus cereus (strain ATCC 14579 / DSM 31 / CCUG 7414 / JCM 2152 / NBRC 15305 / NCIMB 9373 / NCTC 2599 / NRRL B-3711) protein is Holin-like protein CidA 2 (cidA2).